A 224-amino-acid polypeptide reads, in one-letter code: 7-cyano-7-deazaguanine synthase (224 aa).

9-19 (ISGGMDSTLCA) is an ATP binding site. Cys190, Cys198, Cys201, and Cys204 together coordinate Zn(2+).

It belongs to the QueC family. The cofactor is Zn(2+).

The enzyme catalyses 7-carboxy-7-deazaguanine + NH4(+) + ATP = 7-cyano-7-deazaguanine + ADP + phosphate + H2O + H(+). It participates in purine metabolism; 7-cyano-7-deazaguanine biosynthesis. Functionally, catalyzes the ATP-dependent conversion of 7-carboxy-7-deazaguanine (CDG) to 7-cyano-7-deazaguanine (preQ(0)). This is 7-cyano-7-deazaguanine synthase from Campylobacter jejuni (strain RM1221).